A 520-amino-acid chain; its full sequence is Bifunctional dihydrofolate reductase-thymidylate synthase (520 aa).

A DHFR domain is found at 26 to 229; that stretch reads AFSIVVALDK…LEFEICKYVP (204 aa). Position 30 (Val30) interacts with substrate. Residues Ala32 and 38–44 contribute to the NADP(+) site; that span reads GIGDGES. Asp52 serves as a coordination point for substrate. Residues 81-83, 102-105, and 157-164 each bind NADP(+); these read RKT, LSSK, and GGAQVYAD. Substrate contacts are provided by Tyr162 and Thr180. The tract at residues 234-520 is thymidylate synthase; that stretch reads ERQYLELIDR…HPPIKMEMAV (287 aa). Arg254 is a dUMP binding site. Cys400 is a catalytic residue. DUMP contacts are provided by residues His401, 421-425, Asn433, and 463-465; these read QRSCD and HVY.

This sequence in the N-terminal section; belongs to the dihydrofolate reductase family. The protein in the C-terminal section; belongs to the thymidylate synthase family.

It catalyses the reaction (6S)-5,6,7,8-tetrahydrofolate + NADP(+) = 7,8-dihydrofolate + NADPH + H(+). It carries out the reaction dUMP + (6R)-5,10-methylene-5,6,7,8-tetrahydrofolate = 7,8-dihydrofolate + dTMP. It participates in cofactor biosynthesis; tetrahydrofolate biosynthesis; 5,6,7,8-tetrahydrofolate from 7,8-dihydrofolate: step 1/1. Its function is as follows. Bifunctional enzyme. Involved in de novo dTMP biosynthesis. Key enzyme in folate metabolism. Catalyzes an essential reaction for de novo glycine and purine synthesis, DNA precursor synthesis, and for the conversion of dUMP to dTMP. This is Bifunctional dihydrofolate reductase-thymidylate synthase from Leishmania amazonensis.